The sequence spans 549 residues: Hydroxylamine reductase (549 aa).

[4Fe-4S] cluster contacts are provided by Cys-5, Cys-8, Cys-17, and Cys-23. Residues His-244, Glu-268, Cys-312, Cys-403, Cys-431, Cys-456, Glu-491, and Lys-493 each contribute to the hybrid [4Fe-2O-2S] cluster site. Residue Cys-403 is modified to Cysteine persulfide.

It belongs to the HCP family. [4Fe-4S] cluster is required as a cofactor. The cofactor is hybrid [4Fe-2O-2S] cluster.

It is found in the cytoplasm. The enzyme catalyses A + NH4(+) + H2O = hydroxylamine + AH2 + H(+). Catalyzes the reduction of hydroxylamine to form NH(3) and H(2)O. This is Hydroxylamine reductase from Caldanaerobacter subterraneus subsp. tengcongensis (strain DSM 15242 / JCM 11007 / NBRC 100824 / MB4) (Thermoanaerobacter tengcongensis).